The sequence spans 315 residues: Archaeosortase A (315 aa).

7 helical membrane passes run 12–32 (VIPY…AGVA), 47–67 (AGAW…FAFV), 74–94 (TVLI…VFAG), 173–193 (VVFE…IAAV), 204–224 (IALS…FIAL), 227–247 (GYQW…FGLT), and 260–280 (VLAQ…IARW). The active-site Acyl-thioester intermediate is Cys177. The active-site Proton donor is the Arg218.

Belongs to the exosortase/archaeosortase family. Archaeosortase A subfamily.

The protein resides in the cell membrane. Functionally, transpeptidase that recognizes and modifies its substrate by proteolytic cleavage of a sorting signal. Following cleavage, a covalent intermediate is formed via a thioester bond between the archaeosortase and its substrate, which is then transferred and covalently attached to the cell membrane. The polypeptide is Archaeosortase A (Natronomonas pharaonis (strain ATCC 35678 / DSM 2160 / CIP 103997 / JCM 8858 / NBRC 14720 / NCIMB 2260 / Gabara) (Halobacterium pharaonis)).